A 452-amino-acid polypeptide reads, in one-letter code: Ribosomal protein uS12 methylthiotransferase RimO (452 aa).

The MTTase N-terminal domain maps to 3–118 (GKIGFVSLGC…VMQVIHLHLP (116 aa)). 6 residues coordinate [4Fe-4S] cluster: Cys-12, Cys-48, Cys-77, Cys-149, Cys-153, and Cys-156. The 248-residue stretch at 135 to 382 (LTPKHYAYLK…AKAEEISVGR (248 aa)) folds into the Radical SAM core domain. The TRAM domain maps to 384 to 452 (AKKIGKRLQV…SQGHDLIAET (69 aa)).

It belongs to the methylthiotransferase family. RimO subfamily. The cofactor is [4Fe-4S] cluster.

Its subcellular location is the cytoplasm. The enzyme catalyses L-aspartate(89)-[ribosomal protein uS12]-hydrogen + (sulfur carrier)-SH + AH2 + 2 S-adenosyl-L-methionine = 3-methylsulfanyl-L-aspartate(89)-[ribosomal protein uS12]-hydrogen + (sulfur carrier)-H + 5'-deoxyadenosine + L-methionine + A + S-adenosyl-L-homocysteine + 2 H(+). Functionally, catalyzes the methylthiolation of an aspartic acid residue of ribosomal protein uS12. In Polynucleobacter necessarius subsp. necessarius (strain STIR1), this protein is Ribosomal protein uS12 methylthiotransferase RimO.